We begin with the raw amino-acid sequence, 400 residues long: MSAVDIQATRDAGQQLQVRLAQRLDLGLTLSVLALLGLGLVMVASASIGIADRNLGDPLYFLKRQAAYVVLGLAAASLAYRIRLAYWEASAGLLLGFAYFLLILVLVPGVGVTVNGSTRWLSLGLFNLQVSEVAKLLFTLYLAGYLTRHGRAVREQFAGFLRPMLLLSGAALLLLMEPDFGAAVVLMAIGLALLFLAGAKLWQFALLVGTVAAALAMLAITTPYRMARLTAFLDPWNDPFNSGFQLTQSLIAIGSGSWFGVGLGASVQKLFYLPEAHNDFLFAVLAEELGLVGITVVVLLYGWFLWRSFGIGRAAEQAGQLFGAYLAYGVGVWVSLQAFINMGVNMGLLPTKGLTLPLMSYGGSSMLMTCAAVGLLLRVHRETVESGPLRVGRVTGGRGA.

11 consecutive transmembrane segments (helical) span residues leucine 30 to isoleucine 50, glutamine 65 to leucine 84, glycine 92 to valine 112, leucine 123 to alanine 143, phenylalanine 157 to glutamate 177, aspartate 179 to alanine 199, leucine 201 to threonine 221, threonine 247 to valine 267, phenylalanine 280 to leucine 300, leucine 321 to asparagine 341, and leucine 356 to leucine 376.

It belongs to the SEDS family. FtsW subfamily.

The protein localises to the cell inner membrane. It carries out the reaction [GlcNAc-(1-&gt;4)-Mur2Ac(oyl-L-Ala-gamma-D-Glu-L-Lys-D-Ala-D-Ala)](n)-di-trans,octa-cis-undecaprenyl diphosphate + beta-D-GlcNAc-(1-&gt;4)-Mur2Ac(oyl-L-Ala-gamma-D-Glu-L-Lys-D-Ala-D-Ala)-di-trans,octa-cis-undecaprenyl diphosphate = [GlcNAc-(1-&gt;4)-Mur2Ac(oyl-L-Ala-gamma-D-Glu-L-Lys-D-Ala-D-Ala)](n+1)-di-trans,octa-cis-undecaprenyl diphosphate + di-trans,octa-cis-undecaprenyl diphosphate + H(+). It participates in cell wall biogenesis; peptidoglycan biosynthesis. In terms of biological role, peptidoglycan polymerase that is essential for cell division. In Thioalkalivibrio sulfidiphilus (strain HL-EbGR7), this protein is Probable peptidoglycan glycosyltransferase FtsW.